Reading from the N-terminus, the 218-residue chain is DNA endonuclease I-ChuI (218 aa).

It belongs to the LAGLIDADG endonuclease family.

It is found in the plastid. The protein resides in the chloroplast. Probable endonuclease involved in intron homing. Encoded in the group-I intron of the subunit rRNA-encoding gene (rrnL), it generates a staggered cut with 4-nt (CTCG) 3'-OH overhangs 2 bp downstream from the intron insertion site. In Chlamydomonas applanata (Chlamydomonas humicola), this protein is DNA endonuclease I-ChuI.